A 464-amino-acid chain; its full sequence is UDP-N-acetylmuramate--L-alanine ligase (464 aa).

Position 118–124 (118–124) interacts with ATP; sequence GTHGKTT.

The protein belongs to the MurCDEF family.

The protein localises to the cytoplasm. The enzyme catalyses UDP-N-acetyl-alpha-D-muramate + L-alanine + ATP = UDP-N-acetyl-alpha-D-muramoyl-L-alanine + ADP + phosphate + H(+). Its pathway is cell wall biogenesis; peptidoglycan biosynthesis. Its function is as follows. Cell wall formation. This Dinoroseobacter shibae (strain DSM 16493 / NCIMB 14021 / DFL 12) protein is UDP-N-acetylmuramate--L-alanine ligase.